The primary structure comprises 210 residues: Thymidylate kinase (210 aa).

9 to 16 (GLEGAGKS) is a binding site for ATP.

It belongs to the thymidylate kinase family.

It carries out the reaction dTMP + ATP = dTDP + ADP. In terms of biological role, phosphorylation of dTMP to form dTDP in both de novo and salvage pathways of dTTP synthesis. This is Thymidylate kinase from Aliivibrio fischeri (strain ATCC 700601 / ES114) (Vibrio fischeri).